Here is a 146-residue protein sequence, read N- to C-terminus: Hemoglobin subunit beta (146 aa).

Residues His-2 to His-146 enclose the Globin domain. The heme b site is built by His-63 and His-92.

Belongs to the globin family. In terms of assembly, heterotetramer of two alpha chains and two beta chains. As to expression, red blood cells.

Involved in oxygen transport from the lung to the various peripheral tissues. In Chloephaga melanoptera (Andean goose), this protein is Hemoglobin subunit beta (HBB).